Reading from the N-terminus, the 347-residue chain is Beta-hexosaminidase (347 aa).

Substrate contacts are provided by residues D62, R70, R134, and 164–165; that span reads KH. Residue H177 is the Proton donor/acceptor of the active site. D249 acts as the Nucleophile in catalysis.

It belongs to the glycosyl hydrolase 3 family. NagZ subfamily.

It localises to the cytoplasm. It catalyses the reaction Hydrolysis of terminal non-reducing N-acetyl-D-hexosamine residues in N-acetyl-beta-D-hexosaminides.. Its pathway is cell wall biogenesis; peptidoglycan recycling. Plays a role in peptidoglycan recycling by cleaving the terminal beta-1,4-linked N-acetylglucosamine (GlcNAc) from peptide-linked peptidoglycan fragments, giving rise to free GlcNAc, anhydro-N-acetylmuramic acid and anhydro-N-acetylmuramic acid-linked peptides. The sequence is that of Beta-hexosaminidase from Mannheimia succiniciproducens (strain KCTC 0769BP / MBEL55E).